We begin with the raw amino-acid sequence, 254 residues long: MKRIVQVKNVKIGEGIPKICVPIVGATSKEILDEAEKLKELTLDIVEWRVDFYEEVFDIEKVKDTLSKLTTTLNEVPLIFTFRNKIEGGEREIPIEYYLKLNLEVAKTKLVDLIDVELFIGDDLVKEIVEVAHDNDVKVIISNHDFFKTPCKEEIISRLIKMIQLNGDLPKIAVMPQCEIDVLTLLYATNEVKHKYPNNSIITMSMSGRGIISRIAGEIFGSCLTFGAAKKASAPGQIGVEELNSVLKVLHENI.

3-dehydroquinate contacts are provided by residues 47–49 and arginine 83; that span reads EWR. The active-site Proton donor/acceptor is the histidine 144. Lysine 171 functions as the Schiff-base intermediate with substrate in the catalytic mechanism. Residues arginine 214, serine 233, and glutamine 237 each contribute to the 3-dehydroquinate site.

Belongs to the type-I 3-dehydroquinase family. As to quaternary structure, homodimer.

It catalyses the reaction 3-dehydroquinate = 3-dehydroshikimate + H2O. It functions in the pathway metabolic intermediate biosynthesis; chorismate biosynthesis; chorismate from D-erythrose 4-phosphate and phosphoenolpyruvate: step 3/7. Functionally, involved in the third step of the chorismate pathway, which leads to the biosynthesis of aromatic amino acids. Catalyzes the cis-dehydration of 3-dehydroquinate (DHQ) and introduces the first double bond of the aromatic ring to yield 3-dehydroshikimate. The polypeptide is 3-dehydroquinate dehydratase (Clostridium botulinum (strain Eklund 17B / Type B)).